The sequence spans 311 residues: Pseudouridine-5'-phosphate glycosidase (311 aa).

The active-site Proton donor is the Glu-32. The substrate site is built by Lys-96 and Val-116. Asp-148 provides a ligand contact to Mn(2+). 150-152 lines the substrate pocket; that stretch reads SAD. Lys-169 serves as the catalytic Nucleophile.

It belongs to the pseudouridine-5'-phosphate glycosidase family. Homotrimer. Requires Mn(2+) as cofactor.

It catalyses the reaction D-ribose 5-phosphate + uracil = psi-UMP + H2O. Catalyzes the reversible cleavage of pseudouridine 5'-phosphate (PsiMP) to ribose 5-phosphate and uracil. Functions biologically in the cleavage direction, as part of a pseudouridine degradation pathway. In Roseiflexus sp. (strain RS-1), this protein is Pseudouridine-5'-phosphate glycosidase.